A 297-amino-acid polypeptide reads, in one-letter code: Dehydrodolichyl diphosphate synthase complex subunit Nus1 (297 aa).

Transmembrane regions (helical) follow at residues Leu7–Leu26 and Cys40–Leu56. Basic residues predominate over residues Gly63–His73. The disordered stretch occupies residues Gly63–His86. A helical transmembrane segment spans residues Ile121 to Tyr139. N-linked (GlcNAc...) asparagine glycans are attached at residues Asn148 and Asn275. The RXG motif; crucial for prenyltransferase activity signature appears at Arg294 to Gly296. The isopentenyl diphosphate site is built by Leu295 and Gly296.

The protein belongs to the UPP synthase family. In terms of assembly, the active dehydrodolichyl diphosphate synthase complex is a heterotetramer composed of a dimer of heterodimer of DHDDS and NUS1. Interacts with NPC2. Mg(2+) serves as cofactor. As to expression, highly expressed in heart, liver, kidney and pancreas.

It localises to the endoplasmic reticulum membrane. The catalysed reaction is n isopentenyl diphosphate + (2E,6E)-farnesyl diphosphate = a di-trans,poly-cis-polyprenyl diphosphate + n diphosphate. Its pathway is protein modification; protein glycosylation. It participates in lipid metabolism. With DHDDS, forms the dehydrodolichyl diphosphate synthase (DDS) complex, an essential component of the dolichol monophosphate (Dol-P) biosynthetic machinery. Both subunits contribute to enzymatic activity, i.e. condensation of multiple copies of isopentenyl pyrophosphate (IPP) to farnesyl pyrophosphate (FPP) to produce dehydrodolichyl diphosphate (Dedol-PP), a precursor of dolichol phosphate which is utilized as a sugar carrier in protein glycosylation in the endoplasmic reticulum (ER). Synthesizes long-chain polyprenols, mostly of C95 and C100 chain length. Regulates the glycosylation and stability of nascent NPC2, thereby promoting trafficking of LDL-derived cholesterol. Acts as a specific receptor for the N-terminus of Nogo-B, a neural and cardiovascular regulator. The chain is Dehydrodolichyl diphosphate synthase complex subunit Nus1 from Mus musculus (Mouse).